A 319-amino-acid chain; its full sequence is MQILNFVAAEIEPPQTVLGKVYQHDSVLTEEVMAYLQPQGGGIFLDVTLGGGGHSLALLRGGAARVVGLDRDPAALQAAQARFAAEGIPGSRIQLWHLNFADFDLQQHGFRDEQGQGIPFDGIVADLGVSSPQLDCPERGFSFRGEGPLDMRMDPSAAQETAADWVNHRPVEELIEIFTRYGEERFARRIAHHIEQARPLATTTQLAQVVWQAVPPAARRGRIHPATRVFQALRIAVNRELEALETLLAQAPTWLKPGGRLAVISFHSLEDRLVKWAFRRDPRWQVLTPKPLSPSELERQRNPRARSAKLRVAARSSQM.

Residues 52–54, Asp70, Phe100, Asp126, and Gln133 contribute to the S-adenosyl-L-methionine site; that span reads GGH. A disordered region spans residues 289–319; sequence PKPLSPSELERQRNPRARSAKLRVAARSSQM.

This sequence belongs to the methyltransferase superfamily. RsmH family.

It is found in the cytoplasm. It carries out the reaction cytidine(1402) in 16S rRNA + S-adenosyl-L-methionine = N(4)-methylcytidine(1402) in 16S rRNA + S-adenosyl-L-homocysteine + H(+). Functionally, specifically methylates the N4 position of cytidine in position 1402 (C1402) of 16S rRNA. This is Ribosomal RNA small subunit methyltransferase H from Synechococcus sp. (strain JA-2-3B'a(2-13)) (Cyanobacteria bacterium Yellowstone B-Prime).